Reading from the N-terminus, the 217-residue chain is Ribosomal RNA small subunit methyltransferase G (217 aa).

Residues G74, L79, 125-126, and R143 contribute to the S-adenosyl-L-methionine site; that span reads IQ.

This sequence belongs to the methyltransferase superfamily. RNA methyltransferase RsmG family.

Its subcellular location is the cytoplasm. It carries out the reaction guanosine(527) in 16S rRNA + S-adenosyl-L-methionine = N(7)-methylguanosine(527) in 16S rRNA + S-adenosyl-L-homocysteine. In terms of biological role, specifically methylates the N7 position of guanine in position 527 of 16S rRNA. The protein is Ribosomal RNA small subunit methyltransferase G of Syntrophotalea carbinolica (strain DSM 2380 / NBRC 103641 / GraBd1) (Pelobacter carbinolicus).